Reading from the N-terminus, the 206-residue chain is Large ribosomal subunit protein uL4 (206 aa).

Residues 63–85 are disordered; sequence MYKQKGTGSARHGSARAPQFRGG.

This sequence belongs to the universal ribosomal protein uL4 family. As to quaternary structure, part of the 50S ribosomal subunit.

Its function is as follows. One of the primary rRNA binding proteins, this protein initially binds near the 5'-end of the 23S rRNA. It is important during the early stages of 50S assembly. It makes multiple contacts with different domains of the 23S rRNA in the assembled 50S subunit and ribosome. Forms part of the polypeptide exit tunnel. This chain is Large ribosomal subunit protein uL4, found in Beijerinckia indica subsp. indica (strain ATCC 9039 / DSM 1715 / NCIMB 8712).